The sequence spans 715 residues: MEIRMSKSSSKPVLVTCGLPYANGKAHIGHLRTYVPADIYARSLKKEGREVTFVCGSDTHGTPIVVNAEELGITPTELVEIYHKHFDETFKQLGIYFDAFGTTDDPENHNRTHDIVSRLIEKGYVYPKIIEIAYCPACNRFLPDRYVEGACPHCGETARGDECDQGCGKHLEPGELQNPVCTICGGPAEYRQQEHFFFKLSEFSNYLMDYLSKDLGGTTNAINYARGWVKQGLTDWCITRNLEWGVKFPGHEDLVVYVWVDAPIGYIAFTEEWAAQAGDSWEKFWKGDGEIVHFIGGDITYHHCIFWPAMLKGADYSVPTAVVASGMVKIEDRKFSKTRGYVVWVGEDYLDHGFHPDLLRYYLASYTSHTKELNFSWRVLQEKINAELVAVLGNFLYRTMLFAFKNYGEVPEGEVEPEIRKEIEKALVEVKAAMEEYEFKKAVDSAMALASFGNTYFQSHEPWKLIKEDRDACGQVVYNCLHLAKALSLIFEPVIPQTMEKAWKGLGHESDIHAALYEETLVPLKAGTKLAKPEILFTKLEDDRIGEMEEIANQRVAAANAKRNGVKGGEKEPSKSEGMGPSEASKASEKTVDVATAEEKVQVETLPVIDYEDFAKLDIRVGKVLLVEPVKKSKKLLRIEVDIGEEKPRQLVAGMASYYTPEELVGKSVIVLANLKPAKLCGVESNGMMLAADDGGAIVAALMPDKEIKSGSRIR.

Positions 20 to 30 (PYANGKAHIGH) match the 'HIGH' region motif. Zn(2+)-binding residues include C151, C154, C163, and C167. The 'KMSKS' region signature appears at 334–338 (KFSKT). Residue K337 coordinates ATP. Residues 559–593 (ANAKRNGVKGGEKEPSKSEGMGPSEASKASEKTVD) are disordered. Residues 613 to 715 (DFAKLDIRVG…KEIKSGSRIR (103 aa)) enclose the tRNA-binding domain.

The protein belongs to the class-I aminoacyl-tRNA synthetase family. MetG type 1 subfamily. In terms of assembly, homodimer. Requires Zn(2+) as cofactor.

The protein resides in the cytoplasm. It catalyses the reaction tRNA(Met) + L-methionine + ATP = L-methionyl-tRNA(Met) + AMP + diphosphate. Functionally, is required not only for elongation of protein synthesis but also for the initiation of all mRNA translation through initiator tRNA(fMet) aminoacylation. This chain is Methionine--tRNA ligase, found in Methanosarcina mazei (strain ATCC BAA-159 / DSM 3647 / Goe1 / Go1 / JCM 11833 / OCM 88) (Methanosarcina frisia).